A 466-amino-acid polypeptide reads, in one-letter code: Histidine--tRNA ligase (466 aa).

Belongs to the class-II aminoacyl-tRNA synthetase family. Homodimer.

It localises to the cytoplasm. It carries out the reaction tRNA(His) + L-histidine + ATP = L-histidyl-tRNA(His) + AMP + diphosphate + H(+). This Xylella fastidiosa (strain M23) protein is Histidine--tRNA ligase.